Consider the following 154-residue polypeptide: Interleukin-2 (154 aa).

A signal peptide spans 1 to 20 (MYRMQLLSCIALSLALVTNS). Thr23 is a glycosylation site (O-linked (GalNAc...) threonine). Cysteines 78 and 126 form a disulfide.

This sequence belongs to the IL-2 family.

The protein resides in the secreted. Functionally, cytokine produced by activated CD4-positive helper T-cells and to a lesser extend activated CD8-positive T-cells and natural killer (NK) cells that plays pivotal roles in the immune response and tolerance. Binds to a receptor complex composed of either the high-affinity trimeric IL-2R (IL2RA/CD25, IL2RB/CD122 and IL2RG/CD132) or the low-affinity dimeric IL-2R (IL2RB and IL2RG). Interaction with the receptor leads to oligomerization and conformation changes in the IL-2R subunits resulting in downstream signaling starting with phosphorylation of JAK1 and JAK3. In turn, JAK1 and JAK3 phosphorylate the receptor to form a docking site leading to the phosphorylation of several substrates including STAT5. This process leads to activation of several pathways including STAT, phosphoinositide-3-kinase/PI3K and mitogen-activated protein kinase/MAPK pathways. Functions as a T-cell growth factor and can increase NK-cell cytolytic activity as well. Promotes strong proliferation of activated B-cells and subsequently immunoglobulin production. Plays a pivotal role in regulating the adaptive immune system by controlling the survival and proliferation of regulatory T-cells, which are required for the maintenance of immune tolerance. Moreover, participates in the differentiation and homeostasis of effector T-cell subsets, including Th1, Th2, Th17 as well as memory CD8-positive T-cells. This Cercocebus atys (Sooty mangabey) protein is Interleukin-2 (IL2).